The sequence spans 414 residues: tRNA dimethylallyltransferase (414 aa).

33–40 (APTASGKT) serves as a coordination point for ATP. A substrate-binding site is contributed by 35–40 (TASGKT). 3 interaction with substrate tRNA regions span residues 58-61 (DSAL), 182-186 (QRITR), and 266-271 (RCVGYR).

It belongs to the IPP transferase family. In terms of assembly, monomer. Mg(2+) serves as cofactor.

It carries out the reaction adenosine(37) in tRNA + dimethylallyl diphosphate = N(6)-dimethylallyladenosine(37) in tRNA + diphosphate. Catalyzes the transfer of a dimethylallyl group onto the adenine at position 37 in tRNAs that read codons beginning with uridine, leading to the formation of N6-(dimethylallyl)adenosine (i(6)A). The chain is tRNA dimethylallyltransferase from Psychrobacter arcticus (strain DSM 17307 / VKM B-2377 / 273-4).